Reading from the N-terminus, the 457-residue chain is B-cell linker protein (457 aa).

The disordered stretch occupies residues 36-306; it reads IKKLKVKGPP…FPPTQKPVHQ (271 aa). Residues 57 to 74 are compositionally biased toward acidic residues; sequence PADEEEQWSDDFDSDYEN. Residues tyrosine 72, tyrosine 84, tyrosine 96, tyrosine 178, and tyrosine 189 each carry the phosphotyrosine; by SYK modification. Acidic residues predominate over residues 172–187; the sequence is LEDEADYVVPVEDNDE. The span at 207–218 shows a compositional bias: polar residues; sequence NRSTKPNSSSKH. Residues 272-290 are compositionally biased toward basic and acidic residues; sequence CEEKPVPAERHRGSSHRQD. Residues 347–454 form the SH2 domain; it reads WYAGACDRKS…KDSTRLKYAV (108 aa).

As to quaternary structure, associates with PLCG1, VAV1 and NCK1 in a B-cell antigen receptor-dependent fashion. Interacts with VAV3, PLCG2 and GRB2. Interacts through its SH2 domain with CD79A. Interacts (via SH2 domain) with SYK; phosphorylated and activated by SYK. Interacts (via SH2 domain) with SCIMP; this interaction is dependent on phosphorylation of SCIMP 'Tyr-120'. Following BCR activation, phosphorylated on tyrosine residues by SYK and LYN. When phosphorylated, serves as a scaffold to assemble downstream targets of antigen activation, including PLCG1, VAV1, GRB2 and NCK1. Phosphorylation of Tyr-84, Tyr-178 and Tyr-189 facilitates PLCG1 binding. Phosphorylation of Tyr-72 facilitates VAV1 and NCK1 binding. Phosphorylation is required for both Ca(2+) and MAPK signaling pathways. Phosphorylation of Tyr-96 is required for the binding of BTK. In terms of tissue distribution, expressed in the spleen and weakly in thymus, no expression was seen in liver, testis, or brain. Expressed in B-cell lines representing different developmental stages from the pre-B to the plasma cell stage, but not in a T-cell or a fibroblast cell line.

It is found in the cytoplasm. It localises to the cell membrane. Functions as a central linker protein, downstream of the B-cell receptor (BCR), bridging the SYK kinase to a multitude of signaling pathways and regulating biological outcomes of B-cell function and development. Plays a role in the activation of ERK/EPHB2, MAP kinase p38 and JNK. Modulates AP1 activation. Important for the activation of NF-kappa-B and NFAT. Plays an important role in BCR-mediated PLCG1 and PLCG2 activation and Ca(2+) mobilization and is required for trafficking of the BCR to late endosomes. However, does not seem to be required for pre-BCR-mediated activation of MAP kinase and phosphatidyl-inositol 3 (PI3) kinase signaling. May be required for the RAC1-JNK pathway. Plays a critical role in orchestrating the pro-B cell to pre-B cell transition. May play an important role in BCR-induced B-cell apoptosis. The chain is B-cell linker protein (Blnk) from Mus musculus (Mouse).